The sequence spans 502 residues: MGNFLYFSAETWTLLVAFITLLLVYAYWPYGTFKRLGIPGPKPVPFFGTMLAYRKGFFNFDDECRKKYGKTWGIYDGRQPVLCITDPATIKAVLVKECYSLFTNRRNFRLNGPLYDAVSIAEDDQWKRIRSVLSPSFTSGRLKEMFDIMKHHSANLIQSMKKKVDKDEPLEMKEYFGPYSMDVVTSTAFSVDIDSLNNPSDPFVTNIKKMLKFDFLNPLFLAVAFFPFLGPILEKFEFSLFPSSVMDFFFAALRKIKANHENNKQKSRIDFLQLMIDSQKNNQNGLQDKGLSDHEILSQAMIFIFAGYETTSSSLTFLAYNLATNPEVMKKLQKEIDATFPNKAPVQYVPLMEMEYLDCVVNESLRLYPIAARLERVAKATVEVNGLVIPKDMVVMVPTWPLHRDPELWPEPEKFKPERFSKENKDTFDPYTYMPFGAGPRNCIGMRFALVMMKLAVVEILQTYDFSVCKETEVPFEMDVQGFLAPKRPIQLKLTPRSASSS.

Position 443 (C443) interacts with heme.

Belongs to the cytochrome P450 family. The cofactor is heme.

It is found in the endoplasmic reticulum membrane. The protein resides in the microsome membrane. The catalysed reaction is an organic molecule + reduced [NADPH--hemoprotein reductase] + O2 = an alcohol + oxidized [NADPH--hemoprotein reductase] + H2O + H(+). The chain is Cytochrome P450 3A40 (cyp3a40) from Oryzias latipes (Japanese rice fish).